The primary structure comprises 280 residues: Transcription factor HES-1 (280 aa).

The interval 1–44 (MPADIMEKNSSSPVAATPASVNTTPDKPKTASEHRKSSKPIMEK) is disordered. Residues 10–21 (SSSPVAATPASV) show a composition bias toward low complexity. A compositionally biased stretch (basic and acidic residues) spans 26–35 (DKPKTASEHR). Residues 34-91 (HRKSSKPIMEKRRRARINESLSQLKTLILDALKKDSSRHSKLEKADILEMTVKHLRNL) enclose the bHLH domain. The 34-residue stretch at 110–143 (YRAGFSECMNEVTRFLSTCEGVNTEVRTRLLGHL) folds into the Orange domain. Disordered stretches follow at residues 157–200 (GQPH…PPGG) and 254–280 (TSVG…PWRN). Composition is skewed to pro residues over residues 164–174 (QAPPPPPPGPG) and 181–200 (FAPP…PPGG). A compositionally biased stretch (polar residues) spans 254-271 (TSVGPNAVSPSSGPSLTA). A WRPW motif motif is present at residues 275–278 (WRPW).

In terms of assembly, transcription repression requires formation of a complex with a corepressor protein of the Groucho/TLE family. Interacts with SIRT1. Interacts (via WPRW motif) with TLE1, and more weakly with TLE2. Interacts with HES6. Interacts with an FA complex, composed of FANCA, FANCF, FANCG and FANCL, but not of FANCC, nor FANCE.

The protein resides in the nucleus. In terms of biological role, transcriptional repressor of genes that require a bHLH protein for their transcription. May act as a negative regulator of myogenesis by inhibiting the functions of MYOD1 and ASH1. Binds DNA on N-box motifs: 5'-CACNAG-3' with high affinity and on E-box motifs: 5'-CANNTG-3' with low affinity. May play a role in a functional FA core complex response to DNA cross-link damage, being required for the stability and nuclear localization of FA core complex proteins, as well as for FANCD2 monoubiquitination in response to DNA damage. In Bos taurus (Bovine), this protein is Transcription factor HES-1 (HES1).